We begin with the raw amino-acid sequence, 223 residues long: Histone H1.5 (223 aa).

Residues Met-1–Pro-14 are compositionally biased toward low complexity. The segment at Met-1 to Gly-56 is disordered. An N-acetylserine modification is found at Ser-2. The residue at position 2 (Ser-2) is a Phosphoserine. Lys-17 carries the post-translational modification N6-acetyllysine. Ser-18 carries the phosphoserine modification. Residues Ala-20–Ala-35 are compositionally biased toward basic residues. Position 27 is an N6-methyllysine (Lys-27). Lys-34 carries the post-translational modification N6-(beta-hydroxybutyryl)lysine; alternate. Residue Lys-34 is modified to N6-succinyllysine; alternate. Thr-36 is subject to Phosphothreonine. Positions Thr-36–Lys-109 constitute an H15 domain. Lys-46 is subject to N6-acetyllysine. Lys-52 bears the N6-(beta-hydroxybutyryl)lysine mark. A Citrulline modification is found at Arg-54. N6-(beta-hydroxybutyryl)lysine is present on Lys-64. Residue Lys-75 is modified to N6-acetyllysine. N6-(beta-hydroxybutyryl)lysine is present on residues Lys-85, Lys-90, and Lys-106. Positions Gly-91–Lys-223 are disordered. The span at Lys-119–Lys-130 shows a compositional bias: basic residues. A phosphothreonine mark is found at Thr-135 and Thr-152. Positions Lys-137–Lys-158 are enriched in basic residues. Lys-165 carries the post-translational modification N6-acetyllysine. Positions Lys-166 to Ala-184 are enriched in basic residues. Phosphoserine occurs at positions 170 and 186. A compositionally biased stretch (basic residues) spans Lys-191–Lys-223.

It belongs to the histone H1/H5 family. As to quaternary structure, interacts with MSX1. Post-translationally, H1 histones are progressively phosphorylated during the cell cycle, becoming maximally phosphorylated during late G2 phase and M phase, and being dephosphorylated sharply thereafter. Citrullination at Arg-54 (H1R54ci) by PADI4 takes place within the DNA-binding site of H1 and results in its displacement from chromatin and global chromatin decondensation, thereby promoting pluripotency and stem cell maintenance. In terms of processing, hydroxybutyrylation of histones is induced by starvation.

The protein localises to the nucleus. It localises to the chromosome. Functionally, histone H1 protein binds to linker DNA between nucleosomes forming the macromolecular structure known as the chromatin fiber. Histones H1 are necessary for the condensation of nucleosome chains into higher-order structured fibers. Also acts as a regulator of individual gene transcription through chromatin remodeling, nucleosome spacing and DNA methylation. The chain is Histone H1.5 (H1-5) from Mus musculus (Mouse).